Reading from the N-terminus, the 334-residue chain is MSLDINQLVLHQLIKRDEQTLEVVLRDSLLDIEPVVQEMVEELHRVYSAKSKAYGLFNEESELAQALRLQRQGEEEFLGFSRAATVRLKDELAKYPFAEGGTVLFCHYRYLAVEYLLIAVLNSCNSMWVNDSLDVSSTRYLDIPHADIIARIDLTEWETSPDSLRYLTFLKGRVGRKVSDFFMDFLGAQEGLNTKVQNKGLLQAVDDFCEASDMNKQERQTCREQVYSYCNEQLQSGEEIALTELAQELPPLGDQNFAQFTEEKGYELAETFPADRSTLRQLMKYSGSGGGLTVNFDAKLLGERIFWDPATDTLTIKGTPPNLRDQLQRRVSEK.

The protein belongs to the YejK family.

Its subcellular location is the cytoplasm. The protein localises to the nucleoid. The sequence is that of Nucleoid-associated protein PMI0825 from Proteus mirabilis (strain HI4320).